Here is a 455-residue protein sequence, read N- to C-terminus: Probable glucarate dehydratase (455 aa).

Residues H42, T113, Y160, and K215 each coordinate substrate. The Proton acceptor role is filled by K217. D245, E276, and N299 together coordinate Mg(2+). 245-247 (DPN) is a substrate binding site. Substrate-binding positions include N299, 349 to 351 (HSN), H378, and R431. The active-site Proton acceptor is H349.

The protein belongs to the mandelate racemase/muconate lactonizing enzyme family. GlucD subfamily. Mg(2+) is required as a cofactor.

The catalysed reaction is D-glucarate = 5-dehydro-4-deoxy-D-glucarate + H2O. It participates in carbohydrate acid metabolism; D-glucarate degradation; 2,5-dioxopentanoate from D-glucarate: step 1/2. In terms of biological role, catalyzes the dehydration of glucarate to 5-keto-4-deoxy-D-glucarate (5-kdGluc). This is Probable glucarate dehydratase (gudD) from Bacillus subtilis (strain 168).